A 127-amino-acid polypeptide reads, in one-letter code: RxLR effector protein SFI3 (127 aa).

The N-terminal stretch at 1–20 is a signal peptide; sequence MRFLLVAVVAMMALVSSSTA. Residues 40-62 carry the RxLR-dEER motif; the sequence is RSLRNTEERSIAAILAEAGEEDR. Positions 72–107 are WY-domain; the sequence is WYKAKLTPTQVKTVLGVSQAEMNNVAKQLQRLYLGY.

This sequence belongs to the RxLR effector family. As to quaternary structure, forms an unusual trans-homodimer. Interacts with host UBK.

Its subcellular location is the secreted. It localises to the host nucleus. The protein resides in the host nucleolus. Its function is as follows. Effector that suppresses flg22-induced post-translational MAP kinase activation in potato and tomato, but not in Arabidopsis. The perception of highly conserved pathogen- or microbe-associated molecular patterns (PAMPs/MAMPs), such as flg22, triggers converging signaling pathways recruiting MAP kinase cascades and inducing transcriptional re-programming, yielding a generic antimicrobial response. Does not suppress programmed cell death triggered by the P.infestans elicitin infestin-1 (INF1), or by co-expression of tomato Cf4 with Cladosporium fulvum Avr4. Suppresses early pattern-triggered immunity (PTI) via interaction with the U-box-kinase protein UBK, a positive regulator of specific PTI pathways in both potato and Nicotiana benthamiana. The polypeptide is RxLR effector protein SFI3 (Phytophthora infestans (strain T30-4) (Potato late blight agent)).